Reading from the N-terminus, the 467-residue chain is Glutamate--tRNA ligase (467 aa).

The 'HIGH' region motif lies at Pro13–Gly23. Positions Ala118–Pro133 are enriched in basic and acidic residues. A disordered region spans residues Ala118–Pro141. Positions Lys245–Arg249 match the 'KMSKS' region motif. Residue Lys248 coordinates ATP.

This sequence belongs to the class-I aminoacyl-tRNA synthetase family. Glutamate--tRNA ligase type 1 subfamily. In terms of assembly, monomer.

The protein localises to the cytoplasm. The enzyme catalyses tRNA(Glu) + L-glutamate + ATP = L-glutamyl-tRNA(Glu) + AMP + diphosphate. Its function is as follows. Catalyzes the attachment of glutamate to tRNA(Glu) in a two-step reaction: glutamate is first activated by ATP to form Glu-AMP and then transferred to the acceptor end of tRNA(Glu). The chain is Glutamate--tRNA ligase from Bordetella avium (strain 197N).